The primary structure comprises 307 residues: Cytochrome c1 2, heme protein, mitochondrial (307 aa).

A mitochondrion-targeting transit peptide spans 1–64 (MVGGGVIRQL…LLSFSTVASA (64 aa)). Topologically, residues 65-270 (DEAEHGLECP…EPEMEERKLM (206 aa)) are mitochondrial intermembrane. Residues 90–197 (ASIRRGHQVY…NGQNYVFALL (108 aa)) enclose the Cytochrome c domain. 4 residues coordinate heme c: Cys-103, Cys-106, His-107, and Met-226. The helical transmembrane segment at 271-288 (GFKWIFLLSLALLQAAYY) threads the bilayer. Over 289–307 (RRLKWSVLKSRKLVLDVVN) the chain is Mitochondrial matrix.

This sequence belongs to the cytochrome c family. As to quaternary structure, component of the ubiquinol-cytochrome c oxidoreductase (cytochrome b-c1 complex, complex III, CIII), a multisubunit enzyme composed of 10 subunits. The complex is composed of 3 respiratory subunits cytochrome b (MT-CYB), cytochrome c1 (CYC1-1 or CYC1-2) and Rieske protein (UCR1-1 or UCR1-2), 2 core protein subunits MPPalpha1 (or MPPalpha2) and MPPB, and 5 low-molecular weight protein subunits QCR7-1 (or QCR7-2), UCRQ-1 (or UCRQ-2), QCR9, UCRY and probably QCR6-1 (or QCR6-2). The complex exists as an obligatory dimer and forms supercomplexes (SCs) in the inner mitochondrial membrane with NADH-ubiquinone oxidoreductase (complex I, CI), resulting in different assemblies (supercomplexes SCI(1)III(2) and SCI(2)III(4)). In terms of processing, binds 1 heme c group covalently per subunit.

It is found in the mitochondrion inner membrane. Component of the ubiquinol-cytochrome c oxidoreductase, a multisubunit transmembrane complex that is part of the mitochondrial electron transport chain which drives oxidative phosphorylation. The respiratory chain contains 3 multisubunit complexes succinate dehydrogenase (complex II, CII), ubiquinol-cytochrome c oxidoreductase (cytochrome b-c1 complex, complex III, CIII) and cytochrome c oxidase (complex IV, CIV), that cooperate to transfer electrons derived from NADH and succinate to molecular oxygen, creating an electrochemical gradient over the inner membrane that drives transmembrane transport and the ATP synthase. The cytochrome b-c1 complex catalyzes electron transfer from ubiquinol to cytochrome c, linking this redox reaction to translocation of protons across the mitochondrial inner membrane, with protons being carried across the membrane as hydrogens on the quinol. In the process called Q cycle, 2 protons are consumed from the matrix, 4 protons are released into the intermembrane space and 2 electrons are passed to cytochrome c. Cytochrome c1 is a catalytic core subunit containing a c-type heme. It transfers electrons from the [2Fe-2S] iron-sulfur cluster of the Rieske protein to cytochrome c. The polypeptide is Cytochrome c1 2, heme protein, mitochondrial (CYC1-2) (Arabidopsis thaliana (Mouse-ear cress)).